An 851-amino-acid chain; its full sequence is Receptor like protein kinase S.2 (851 aa).

The region spanning 117–436 (FSDELILGSG…LPSFKSHPLY (320 aa)) is the Protein kinase 1 domain. ATP-binding positions include 123–131 (LGSGGFGRV) and Lys146. Asp248 serves as the catalytic Proton acceptor. A disordered region spans residues 448-471 (SATTTTTRTTMTTTTSTTSFNASS). The Protein kinase 2 domain occupies 532–819 (FSDARRVAEV…SILDGSERFF (288 aa)). Residues 538 to 546 (VAEVDFGTA) and Lys560 each bind ATP.

This sequence belongs to the protein kinase superfamily. Ser/Thr protein kinase family.

It carries out the reaction L-seryl-[protein] + ATP = O-phospho-L-seryl-[protein] + ADP + H(+). The catalysed reaction is L-threonyl-[protein] + ATP = O-phospho-L-threonyl-[protein] + ADP + H(+). This is Receptor like protein kinase S.2 (LECRKS2) from Arabidopsis thaliana (Mouse-ear cress).